Reading from the N-terminus, the 181-residue chain is Probable Brix domain-containing ribosomal biogenesis protein (181 aa).

The region spanning 5–181 is the Brix domain; sequence CKVIITTSRE…RIKKVVYRHV (177 aa).

In terms of biological role, probably involved in the biogenesis of the ribosome. In Pyrobaculum aerophilum (strain ATCC 51768 / DSM 7523 / JCM 9630 / CIP 104966 / NBRC 100827 / IM2), this protein is Probable Brix domain-containing ribosomal biogenesis protein.